A 272-amino-acid polypeptide reads, in one-letter code: Zinc transporter ZupT (272 aa).

8 helical membrane passes run 11–31 (IALA…LMVV), 40–60 (LLAF…LTEI), 76–96 (LGFT…MVID), 126–146 (LMTA…TFFA), 158–178 (AFAI…PVYF), 189–209 (ASLL…LALF), 211–231 (VLSD…MVFL), and 250–270 (VYGL…FRFA). 2 residues coordinate Fe(2+): asparagine 136 and glutamate 139. Zn(2+)-binding residues include glutamate 139 and histidine 164. The Fe(2+) site is built by asparagine 165, glutamate 168, and glutamate 197. Glutamate 168 is a binding site for Zn(2+).

It belongs to the ZIP transporter (TC 2.A.5) family. ZupT subfamily.

The protein resides in the cell inner membrane. It carries out the reaction Zn(2+)(in) = Zn(2+)(out). Functionally, mediates zinc uptake. May also transport other divalent cations. In Xanthomonas axonopodis pv. citri (strain 306), this protein is Zinc transporter ZupT.